We begin with the raw amino-acid sequence, 284 residues long: S-formylglutathione hydrolase (284 aa).

At A2 the chain carries N-acetylalanine. Residues N63 and K67 each coordinate substrate. Active-site charge relay system residues include S152, D229, and H262.

It belongs to the esterase D family. In terms of assembly, homodimer.

It catalyses the reaction S-formylglutathione + H2O = formate + glutathione + H(+). Its activity is regulated as follows. Activity toward p-nitrophenyl acetate inhibited by N-ethylmaleimide, 10-(fluoroethoxyphosphinyl)-N-(biotinamidopentyl)decanamide (FP-biotin), iodoacetamide, CuCl(2) and ZnSO(4), but not by phenylmethylsulfonyl fluoride, EDTA, Mg(2+), Mn(2+), Ca(2+) or paraoxon, an organo-phosphate inhibitor of serine hydrolases. Serine hydrolase which catalyzes the hydrolysis of S-formylglutathione to glutathione and formic acid. Also hydrolyzes S-acetylglutathione and a range of carboxyesters in vitro. Involved in the detoxification of formaldehyde. The chain is S-formylglutathione hydrolase (SFGH) from Arabidopsis thaliana (Mouse-ear cress).